Here is a 165-residue protein sequence, read N- to C-terminus: Small ribosomal subunit protein eS10 (165 aa).

Y12 carries the post-translational modification Phosphotyrosine. Positions 92 to 165 are disordered; the sequence is ATLRRSRPET…FGRGRGQPPQ (74 aa). Residues 97-128 show a composition bias toward basic and acidic residues; sequence SRPETGRPRPKGLEGERPARLTRGEADRDTYR. Residues K138 and K139 each participate in a glycyl lysine isopeptide (Lys-Gly) (interchain with G-Cter in ubiquitin) cross-link. At S146 the chain carries Phosphoserine. R153 is subject to Omega-N-methylarginine. The segment covering 154–165 has biased composition (gly residues); sequence GGFGRGRGQPPQ. 2 positions are modified to symmetric dimethylarginine: R158 and R160.

The protein belongs to the eukaryotic ribosomal protein eS10 family. As to quaternary structure, component of the small ribosomal subunit. The methylated form interacts with NPM1. Post-translationally, methylated by PRMT5. Methylation is necessary for its interaction with NPS1, its localization in the granular component (GC) region of the nucleolus, for the proper assembly of ribosomes, protein synthesis and optimal cell proliferation. Monoubiquitinated by ZNF598 when a ribosome has stalled during translation of poly(A) sequences, leading to preclude synthesis of a long poly-lysine tail and initiate the ribosome quality control (RQC) pathway to degrade the potentially detrimental aberrant nascent polypeptide. Deubiquitinated by OTUD3 and USP21, antagonizing ZNF598 activity. Deubiquitinated by OTUD1, antagonizing ZNF598 activity and stimulating formation of polysomes: deubiquitination by OTUD1 promotes stability and translation of a subset mRNAs with a high abundance of rare codons can limit the translation rate. Deubiquitinated by USP10.

The protein resides in the cytoplasm. It is found in the nucleus. Its subcellular location is the nucleolus. In terms of biological role, component of the 40S ribosomal subunit. The ribosome is a large ribonucleoprotein complex responsible for the synthesis of proteins in the cell. In Oryctolagus cuniculus (Rabbit), this protein is Small ribosomal subunit protein eS10 (RPS10).